Here is a 138-residue protein sequence, read N- to C-terminus: Large ribosomal subunit protein uL16 (138 aa).

Over residues 1-17 the composition is skewed to basic residues; the sequence is MLIPRKVKHRKQHHPRQ. Residues 1–22 form a disordered region; the sequence is MLIPRKVKHRKQHHPRQRGIAS.

The protein belongs to the universal ribosomal protein uL16 family. As to quaternary structure, part of the 50S ribosomal subunit.

Functionally, binds 23S rRNA and is also seen to make contacts with the A and possibly P site tRNAs. The polypeptide is Large ribosomal subunit protein uL16 (Mycobacterium leprae (strain Br4923)).